The chain runs to 505 residues: 11S globulin seed storage protein 1 (505 aa).

An N-terminal signal peptide occupies residues 1-24; that stretch reads MAKPILLSIYLCLIIVALFNGCLA. Disulfide bonds link C37/C70 and C113/C323. Residues 42–255 enclose the Cupin type-1 1 domain; the sequence is LDALEPTNRI…AFNVDTETAR (214 aa). IgE-binding stretches follow at residues 118 to 132, 208 to 219, and 238 to 249; these read EESQ…RREF, EQHRRQQQHQQR, and FDAEFLADAFNV. Residues 193–232 form a disordered region; that stretch reads GNPDDEFRPQGQQEYEQHRRQQQHQQRRGEHGEQQRDLGN. The span at 219–228 shows a compositional bias: basic and acidic residues; sequence RRGEHGEQQR. The segment covering 282 to 316 has biased composition (basic and acidic residues); the sequence is WSREEQEHEERKERERERESESERRQSRRGGRDDN. Residues 282–318 are disordered; the sequence is WSREEQEHEERKERERERESESERRQSRRGGRDDNGL. An NGXEET; peptidase recognition motif motif is present at residues 316–321; the sequence is NGLEET. A Cupin type-1 2 domain is found at 329–478; that stretch reads ENIGDPSRAD…AFQIPREDAR (150 aa).

The protein belongs to the 11S seed storage protein (globulins) family. As to quaternary structure, homohexamer. Each subunit is composed of an acidic and a basic chain derived from a single precursor and linked by a disulfide bond. As to expression, expressed in seeds (at protein level). Expressed in seeds.

In terms of biological role, seed storage protein. The polypeptide is 11S globulin seed storage protein 1 (Carya illinoinensis (Pecan)).